The sequence spans 146 residues: Putative pre-16S rRNA nuclease (146 aa).

Belongs to the YqgF nuclease family.

The protein localises to the cytoplasm. Could be a nuclease involved in processing of the 5'-end of pre-16S rRNA. This is Putative pre-16S rRNA nuclease from Paraburkholderia xenovorans (strain LB400).